Consider the following 358-residue polypeptide: Mannonate dehydratase (358 aa).

Belongs to the mannonate dehydratase family. Fe(2+) is required as a cofactor. Requires Mn(2+) as cofactor.

The catalysed reaction is D-mannonate = 2-dehydro-3-deoxy-D-gluconate + H2O. It participates in carbohydrate metabolism; pentose and glucuronate interconversion. Catalyzes the dehydration of D-mannonate. The polypeptide is Mannonate dehydratase (Lactococcus lactis subsp. lactis (strain IL1403) (Streptococcus lactis)).